Here is a 1551-residue protein sequence, read N- to C-terminus: Dual oxidase 1 (1551 aa).

The first 21 residues, 1–21, serve as a signal peptide directing secretion; sequence MAVYSAVAWILLFGVLASLGA. Residues 22 to 596 lie on the Extracellular side of the membrane; that stretch reads QNPVSWEVQR…YFKGSGFGFG (575 aa). A peroxidase-like; mediates peroxidase activity region spans residues 26–593; the sequence is SWEVQRFDGW…VRDYFKGSGF (568 aa). N-linked (GlcNAc...) asparagine glycosylation is found at asparagine 94, asparagine 342, asparagine 354, asparagine 461, and asparagine 534. Residues 597 to 617 form a helical membrane-spanning segment; the sequence is LTIGTLCCFPLVSLLSAWIVA. The Cytoplasmic segment spans residues 618-1044; sequence RLRMRNFKRL…KRFIENYRRH (427 aa). EF-hand domains follow at residues 815-850, 851-886, and 895-930; these read PQDM…FMKG, SPEE…FIEI, and QLAE…HDSD. Ca(2+) is bound by residues aspartate 828, aspartate 830, asparagine 832, tyrosine 834, glutamate 839, aspartate 864, aspartate 866, asparagine 868, and glutamate 875. Positions 956-1248 are interaction with TXNDC11; the sequence is YISQEKICPS…GSFALIQMPR (293 aa). The chain crosses the membrane as a helical span at residues 1045–1065; that stretch reads IGCVAVFYTITGALFLERAYY. At 1066–1080 the chain is on the extracellular side; the sequence is YAFAAHHSGITDTTR. The chain crosses the membrane as a helical span at residues 1081 to 1101; that stretch reads VGIILSRGTAASISFMFSYIL. Residues 1087 to 1269 enclose the Ferric oxidoreductase domain; the sequence is RGTAASISFM…YVGDKLVSLS (183 aa). Residues 1102–1136 lie on the Cytoplasmic side of the membrane; sequence LTMCRNLITFLRETFLNRYIPFDAAVDFHRFIAST. Residues 1137–1157 traverse the membrane as a helical segment; that stretch reads AIILTVLHSAGHVVNVYLFSI. The Extracellular segment spans residues 1158–1188; that stretch reads SPLSVLSCLFPDLFHDDGSEFPQKYYWWFFQ. The chain crosses the membrane as a helical span at residues 1189-1209; that stretch reads TVPGLTGVLLLLALAIMYVFA. The Cytoplasmic segment spans residues 1210-1226; that stretch reads SHHFRRRSFRGFWLTHH. A helical transmembrane segment spans residues 1227–1247; it reads LYIFLYILLIIHGSFALIQMP. Arginine 1248 is a topological domain (extracellular). Residues 1249 to 1269 form a helical membrane-spanning segment; sequence FHIFFLVPAIIYVGDKLVSLS. The FAD-binding FR-type domain occupies 1270–1376; sequence RKKVEISVVK…DGPFGEGHQE (107 aa). Topologically, residues 1270–1551 are cytoplasmic; it reads RKKVEISVVK…THFSHHYENF (282 aa).

The protein in the N-terminal section; belongs to the peroxidase family. In terms of assembly, interacts with TXNDC11, TPO and CYBA. In terms of processing, N-glycosylated. As to expression, expressed in thyrocytes (at protein level).

Its subcellular location is the apical cell membrane. It catalyses the reaction NADH + O2 + H(+) = H2O2 + NAD(+). It carries out the reaction NADPH + O2 + H(+) = H2O2 + NADP(+). Its pathway is hormone biosynthesis; thyroid hormone biosynthesis. With respect to regulation, the NADPH oxidase activity is calcium-dependent. Peroxidase activity is inhibited by aminobenzohydrazide. Generates hydrogen peroxide which is required for the activity of thyroid peroxidase/TPO and lactoperoxidase/LPO. Plays a role in thyroid hormones synthesis and lactoperoxidase-mediated antimicrobial defense at the surface of mucosa. May have its own peroxidase activity through its N-terminal peroxidase-like domain. The chain is Dual oxidase 1 (Duox1) from Rattus norvegicus (Rat).